A 181-amino-acid polypeptide reads, in one-letter code: ATP-dependent protease subunit HslV (181 aa).

T7 is an active-site residue. Na(+) contacts are provided by A162, C165, and T168.

This sequence belongs to the peptidase T1B family. HslV subfamily. As to quaternary structure, a double ring-shaped homohexamer of HslV is capped on each side by a ring-shaped HslU homohexamer. The assembly of the HslU/HslV complex is dependent on binding of ATP.

It is found in the cytoplasm. The enzyme catalyses ATP-dependent cleavage of peptide bonds with broad specificity.. Allosterically activated by HslU binding. In terms of biological role, protease subunit of a proteasome-like degradation complex believed to be a general protein degrading machinery. The chain is ATP-dependent protease subunit HslV from Coxiella burnetii (strain RSA 331 / Henzerling II).